Consider the following 118-residue polypeptide: Turripeptide NCR-01 (118 aa).

The first 16 residues, 1 to 16, serve as a signal peptide directing secretion; it reads MLRLILAVALVAACLA. The disordered stretch occupies residues 63–118; that stretch reads QGFQGFLPQPHQKRDSYQHGGYQHQQSFDNFQGSGGMNNDNSDDSFALRNFNNDGY. Over residues 85-102 the composition is skewed to polar residues; it reads QHQQSFDNFQGSGGMNND.

As to expression, expressed by the venom duct.

It localises to the secreted. This Gemmula speciosa (Splendid gem-turris) protein is Turripeptide NCR-01.